A 204-amino-acid chain; its full sequence is Ribonuclease HII (204 aa).

The RNase H type-2 domain maps to 1–197; the sequence is MTLGIDEAGR…KNRILNPKLL (197 aa). Residues Asp-6, Glu-7, and Asp-103 each contribute to the a divalent metal cation site.

The protein belongs to the RNase HII family. Mn(2+) is required as a cofactor. The cofactor is Mg(2+).

The protein localises to the cytoplasm. It catalyses the reaction Endonucleolytic cleavage to 5'-phosphomonoester.. Its function is as follows. Endonuclease that specifically degrades the RNA of RNA-DNA hybrids. The polypeptide is Ribonuclease HII (Helicobacter pylori (strain HPAG1)).